We begin with the raw amino-acid sequence, 680 residues long: Fermitin family homolog 2 (680 aa).

The interaction with membranes containing phosphatidylinositol phosphate stretch occupies residues 40–81; that stretch reads HIGGVMLKLVEKLDVKKDWSDHALWWEKKRTWLLKTHWTLDK. The disordered stretch occupies residues 141-165; that stretch reads LKKPRDPTKKKKKKLDDQSEDEALE. Phosphoserine occurs at positions 159, 181, 339, and 351. Residues 189–661 enclose the FERM domain; sequence MTPTYDAHDG…GYIFLSTRAK (473 aa). The region spanning 380–476 is the PH domain; sequence KVFKPKKLTL…WMAACRLASK (97 aa). Lys-383 provides a ligand contact to a 1,2-diacyl-sn-glycero-3-phospho-(1D-myo-inositol-3,4,5-trisphosphate). Ser-666 is modified (phosphoserine).

This sequence belongs to the kindlin family. As to quaternary structure, interacts with ILK. Interacts with FBLIM1. Interacts with ITGB1 and ITGB3. Interacts with active, unphosphorylated CTNNB1. Identified in a complex with CTNNB1 and TCF7L2/TCF4. Interacts with ITGB1; the interaction is inhibited in presence of ITGB1BP1. In terms of tissue distribution, ubiquitous. Found in numerous tumor tissues.

The protein resides in the cytoplasm. It localises to the cell cortex. The protein localises to the cytoskeleton. It is found in the stress fiber. Its subcellular location is the cell junction. The protein resides in the focal adhesion. It localises to the membrane. The protein localises to the cell projection. It is found in the lamellipodium membrane. Its subcellular location is the nucleus. The protein resides in the myofibril. It localises to the sarcomere. The protein localises to the i band. It is found in the cell surface. In terms of biological role, scaffolding protein that enhances integrin activation mediated by TLN1 and/or TLN2, but activates integrins only weakly by itself. Binds to membranes enriched in phosphoinositides. Enhances integrin-mediated cell adhesion onto the extracellular matrix and cell spreading; this requires both its ability to interact with integrins and with phospholipid membranes. Required for the assembly of focal adhesions. Participates in the connection between extracellular matrix adhesion sites and the actin cytoskeleton and also in the orchestration of actin assembly and cell shape modulation. Recruits FBLIM1 to focal adhesions. Plays a role in the TGFB1 and integrin signaling pathways. Stabilizes active CTNNB1 and plays a role in the regulation of transcription mediated by CTNNB1 and TCF7L2/TCF4 and in Wnt signaling. This is Fermitin family homolog 2 (FERMT2) from Homo sapiens (Human).